Here is a 617-residue protein sequence, read N- to C-terminus: Chaperone protein DnaK (617 aa).

Threonine 175 carries the post-translational modification Phosphothreonine; by autocatalysis. Low complexity predominate over residues alanine 578–alanine 592. The tract at residues alanine 578 to lysine 617 is disordered. Residues glycine 600–lysine 617 show a composition bias toward basic and acidic residues.

Belongs to the heat shock protein 70 family.

In terms of biological role, acts as a chaperone. The chain is Chaperone protein DnaK from Clostridium novyi (strain NT).